Here is a 472-residue protein sequence, read N- to C-terminus: MFGLNKASSTPAGGLFGQASGASTGNANTGFSFGGTQTGQNTGPSTGGLFGAKPAGSTGGLGASFGQQQQQSQTNAFGGSATTGGGLFGNKPNNTANTGGGLFGANSNSNSGSLFGSNNAQTSRGLFGNNNTNNINNSSSGMNNASAGLFGSKPAGGTSLFGNTSTSSAPAQNQGMFGAKPAGTSLFGNNAGNTTTGGGLFGSKPTGATSLFGSSNNNNNNNNSNNIMSASGGLFGNQQQQLQQQPQMQCALQNLSQLPITPMTRISELPPQIRQEIEQLDQYIQKQVQISHHLKADTIDHDELIDSIPRDVAYLLKSESATSQYLKQDLKKISSFKSLIDEDLLDTQTFSVLLQQLLTPGSKISSNDLDKFFQKKIHLYEKKLEDYCRILSDIETAVNGIDTDLFGAPNNPNSTAITADLGSSEAENLLQLKTGLAAIVSTVIEEFTLFMDIAERIAVLHQKTKTLASLSI.

The stretch at 2–3 (FG) is one FG 1 repeat. The GLFG 1 repeat unit spans residues 14–17 (GLFG). A disordered region spans residues 28–104 (NTGFSFGGTQ…TANTGGGLFG (77 aa)). The stretch at 33–34 (FG) is one FG 2 repeat. The GLFG 2 repeat unit spans residues 48-51 (GLFG). Low complexity predominate over residues 64–80 (SFGQQQQQSQTNAFGGS). FG repeat units follow at residues 65 to 66 (FG) and 77 to 78 (FG). GLFG repeat units lie at residues 86 to 89 (GLFG) and 101 to 104 (GLFG). Residues 113–116 (SLFG) form an SLFG 1 repeat. 2 GLFG repeats span residues 125–128 (GLFG) and 148–151 (GLFG). An SLFG 2 repeat occupies 159–162 (SLFG). One copy of the GLFG 7; approximate repeat lies at 175–178 (GMFG). The stretch at 185–188 (SLFG) is one SLFG 3 repeat. The GLFG 8 repeat unit spans residues 199–202 (GLFG). The SLFG 4 repeat unit spans residues 210–213 (SLFG). Positions 211 to 242 (LFGSSNNNNNNNNSNNIMSASGGLFGNQQQQL) are disordered. Residues 214-226 (SSNNNNNNNNSNN) show a composition bias toward low complexity. Residues 233–236 (GLFG) form a GLFG 9 repeat.

It belongs to the nucleoporin GLFG family. Component of the nuclear pore complex (NPC). NPC constitutes the exclusive means of nucleocytoplasmic transport. NPCs allow the passive diffusion of ions and small molecules and the active, nuclear transport receptor-mediated bidirectional transport of macromolecules such as proteins, RNAs, ribonucleoparticles (RNPs), and ribosomal subunits across the nuclear envelope. Due to its 8-fold rotational symmetry, all subunits are present with 8 copies or multiples thereof. NUP49 is part of the NUP57 subcomplex (NIC96, NSP1, NUP49, NUP57) interacting with NUP57. Interacts through its FG repeats with karyopherins.

It is found in the nucleus. The protein localises to the nuclear pore complex. Its subcellular location is the nucleus membrane. In terms of biological role, functions as a component of the nuclear pore complex (NPC). NPC components, collectively referred to as nucleoporins (NUPs), can play the role of both NPC structural components and of docking or interaction partners for transiently associated nuclear transport factors. Active directional transport is assured by both, a Phe-Gly (FG) repeat affinity gradient for these transport factors across the NPC and a transport cofactor concentration gradient across the nuclear envelope (GSP1 and GSP2 GTPases associated predominantly with GTP in the nucleus, with GDP in the cytoplasm). NUP49 plays an important role in several nuclear transport pathways including poly(A)+ RNA, tRNA, and pre-ribosome transport. The protein is Nucleoporin NUP49/NSP49 (NUP49) of Saccharomyces cerevisiae (strain ATCC 204508 / S288c) (Baker's yeast).